The following is a 212-amino-acid chain: Pyrrolidone-carboxylate peptidase (212 aa).

Active-site residues include glutamate 80, cysteine 143, and histidine 165.

This sequence belongs to the peptidase C15 family. As to quaternary structure, homotetramer.

It localises to the cytoplasm. It carries out the reaction Release of an N-terminal pyroglutamyl group from a polypeptide, the second amino acid generally not being Pro.. Removes 5-oxoproline from various penultimate amino acid residues except L-proline. The protein is Pyrrolidone-carboxylate peptidase of Vibrio campbellii (strain ATCC BAA-1116).